A 481-amino-acid chain; its full sequence is Serine/threonine-protein kinase US3 (481 aa).

Residues 12–63 (RPDKRQEASVPPETNTAPAFPASTFYTPAEDAYLAPGPPETIHPSRPPSPGE) are disordered. Residues 47–61 (PGPPETIHPSRPPSP) show a composition bias toward pro residues. Residues 191–478 (FAIHGALIPG…AAELLRLPLF (288 aa)) form the Protein kinase domain. ATP contacts are provided by residues 197–205 (LIPGSEGCV) and Lys220. Asp305 functions as the Proton acceptor in the catalytic mechanism.

Belongs to the protein kinase superfamily. Ser/Thr protein kinase family. In terms of assembly, interacts with host LAT; this interaction prevents LAT activation of TRAF6. In terms of processing, phosphorylated by UL13; this phosphorylation regulates subsequent phosphorylation of UL31 and UL34 by US3. Autophosphorylated.

The protein resides in the host cytoplasm. The protein localises to the host nucleus. The catalysed reaction is L-seryl-[protein] + ATP = O-phospho-L-seryl-[protein] + ADP + H(+). It catalyses the reaction L-threonyl-[protein] + ATP = O-phospho-L-threonyl-[protein] + ADP + H(+). Its function is as follows. Multifunctional serine/threonine kinase that plays a role in several processes including egress of virus particles from the nucleus, modulation of the actin cytoskeleton and inhibition of host immune response. Phosphorylates UL31 and UL34, two critical regulators of capsid budding from nucleus to endoplasmic reticulum, thereby facilitating virion egress. Modulates and redistributes host components of the nuclear envelope, including LMNA, emerin/EMD and the nuclear matrix protein MATR3. In turn, facilitates nuclear pore impairment and capsid release through impaired nuclear envelope. Phosphorylates envelope glycoprotein B (gB), probably to direct it to the cell surface. Promotes virus intracellular spread by restructuring host cell cytoskeleton. Blocks host apoptosis to extend cell survival and allow efficient viral replication. Promotes viral gene expression by phosphorylating host HDAC2 to reduce viral genome silencing. Strongly inhibits TCR-activated signal transduction in T-cells by reducing the ubiquitination of LAT and TRAF6, leading to a suboptimal activation of LAT. Subverts host antiviral innate immunity by inhibiting type I interferon production through hyperphosphorylation of beta-catenin/CTNNB1. In addition, phosphorylates the RNA sensor RIGI and the transcription factor IRF3 to prevent the RLR-mediated antiviral signaling pathway. Hyperphosphorylates host RELA and thereby dampens NF-kappa-B signaling. Acts as an immunoevasin partly responsible for inhibition of MR1 expression and antigen presentation in response to bacterial infection. In Human herpesvirus 2 (strain HG52) (HHV-2), this protein is Serine/threonine-protein kinase US3 (US3).